Here is a 393-residue protein sequence, read N- to C-terminus: Probable WRKY transcription factor 25 (393 aa).

The WRKY 1 DNA-binding region spans 160-224 (MVSRNSNDGY…YKGGHNHPKP (65 aa)). Residues Cys191, Cys196, His219, and His221 each contribute to the Zn(2+) site. Disordered stretches follow at residues 217 to 242 (GGHN…VNGR) and 277 to 303 (SEYG…DEGM). Polar residues predominate over residues 229–240 (RPSQSSLPSSVN). Positions 289 to 298 (PEMKRMKREG) are enriched in basic and acidic residues. The WRKY 2 DNA-binding region spans 322 to 387 (SDIDVLIDGF…YEGRHNHDIP (66 aa)). Residues Cys353, Cys358, His382, and His384 each coordinate Zn(2+).

It belongs to the WRKY group I family. Interacts with MKS1. Interacts with SIB1. Interacts with VQ10 and CAMBP25/VQ15. Post-translationally, phosphorylated by MPK4. In terms of tissue distribution, highly expressed in roots and at lower levels in leaves, stems and seeds.

The protein localises to the nucleus. Transcription factor. Interacts specifically with the W box (5'-(T)TGAC[CT]-3'), a frequently occurring elicitor-responsive cis-acting element. Functions with WRKY33 as positive regulator of salt stress response and abscisic acid (ABA) signaling. Plays a partial role in heat stress tolerance. Functions with WRKY26 and WRKY33 as positive regulator of plant thermotolerance by partially participating in ethylene-response signal transduction pathway. The chain is Probable WRKY transcription factor 25 (WRKY25) from Arabidopsis thaliana (Mouse-ear cress).